We begin with the raw amino-acid sequence, 242 residues long: MSGSHAPEGDCCLRQCRAQDKEHPRYLIPELCKQFYHLGWVTGTGGGISLKHGNEIYIAPSGVQKERIQPEDMFVCDINEKDISGPPPSKNLKKSQCTPLFMNAYTMREAGAVIHTHSKAAVMATLVFPGKEFKITHQEMIKGIKKCTSGGYYRYDDMLVVPIIENTPEEKDLKERMARAVNDYPDSCAVLVRRHGVYVWGETWEKAKTMCECYDYLFDVAVSMKQAGLDPAQLPAGENGIV.

C97 contributes to the substrate binding site. H115 and H117 together coordinate Zn(2+). E139 functions as the Proton donor/acceptor in the catalytic mechanism. Zn(2+) is bound at residue H195.

It belongs to the aldolase class II family. MtnB subfamily. Homotetramer. Interacts with APAF1. May interact with CASP1. Requires Zn(2+) as cofactor.

The protein resides in the cytoplasm. The catalysed reaction is 5-(methylsulfanyl)-D-ribulose 1-phosphate = 5-methylsulfanyl-2,3-dioxopentyl phosphate + H2O. It participates in amino-acid biosynthesis; L-methionine biosynthesis via salvage pathway; L-methionine from S-methyl-5-thio-alpha-D-ribose 1-phosphate: step 2/6. In terms of biological role, catalyzes the dehydration of methylthioribulose-1-phosphate (MTRu-1-P) into 2,3-diketo-5-methylthiopentyl-1-phosphate (DK-MTP-1-P). Functions in the methionine salvage pathway, which plays a key role in cancer, apoptosis, microbial proliferation and inflammation. May inhibit the CASP1-related inflammatory response (pyroptosis), the CASP9-dependent apoptotic pathway and the cytochrome c-dependent and APAF1-mediated cell death. This chain is Methylthioribulose-1-phosphate dehydratase, found in Bos taurus (Bovine).